The primary structure comprises 819 residues: THO complex subunit 5B (819 aa).

The disordered stretch occupies residues 285-332; that stretch reads ARQQSRKDSGMSSNTESSRLEDDGPDDDDDGQRRRKRPKKLTSKEGSD.

This sequence belongs to the THOC5 family. In terms of assembly, component of the THO complex, which is composed of THO1, THO2, THO3, THO5, THO6 and THO7.

Its subcellular location is the nucleus. Acts as a component of the THO subcomplex of the TREX complex which is thought to couple mRNA transcription, processing and nuclear export. The chain is THO complex subunit 5B (THO5B) from Arabidopsis thaliana (Mouse-ear cress).